The following is a 334-amino-acid chain: Ornithine carbamoyltransferase (334 aa).

Carbamoyl phosphate-binding positions include 57–60, Gln84, Arg108, and 135–138; these read STRT and HPTQ. L-ornithine is bound by residues Asn168, Asp233, and 237-238; that span reads SM. Residues 275 to 276 and Arg320 each bind carbamoyl phosphate; that span reads CL.

Belongs to the aspartate/ornithine carbamoyltransferase superfamily. OTCase family.

Its subcellular location is the cytoplasm. It carries out the reaction carbamoyl phosphate + L-ornithine = L-citrulline + phosphate + H(+). Its pathway is amino-acid biosynthesis; L-arginine biosynthesis; L-arginine from L-ornithine and carbamoyl phosphate: step 1/3. In terms of biological role, reversibly catalyzes the transfer of the carbamoyl group from carbamoyl phosphate (CP) to the N(epsilon) atom of ornithine (ORN) to produce L-citrulline. The sequence is that of Ornithine carbamoyltransferase from Thermobifida fusca (strain YX).